Here is a 74-residue protein sequence, read N- to C-terminus: UPF0435 protein BcerKBAB4_0386 (74 aa).

This sequence belongs to the UPF0435 family.

This Bacillus mycoides (strain KBAB4) (Bacillus weihenstephanensis) protein is UPF0435 protein BcerKBAB4_0386.